The chain runs to 180 residues: ATP synthase subunit delta (180 aa).

This sequence belongs to the ATPase delta chain family. F-type ATPases have 2 components, F(1) - the catalytic core - and F(0) - the membrane proton channel. F(1) has five subunits: alpha(3), beta(3), gamma(1), delta(1), epsilon(1). F(0) has three main subunits: a(1), b(2) and c(10-14). The alpha and beta chains form an alternating ring which encloses part of the gamma chain. F(1) is attached to F(0) by a central stalk formed by the gamma and epsilon chains, while a peripheral stalk is formed by the delta and b chains.

It localises to the cell membrane. Functionally, f(1)F(0) ATP synthase produces ATP from ADP in the presence of a proton or sodium gradient. F-type ATPases consist of two structural domains, F(1) containing the extramembraneous catalytic core and F(0) containing the membrane proton channel, linked together by a central stalk and a peripheral stalk. During catalysis, ATP synthesis in the catalytic domain of F(1) is coupled via a rotary mechanism of the central stalk subunits to proton translocation. Its function is as follows. This protein is part of the stalk that links CF(0) to CF(1). It either transmits conformational changes from CF(0) to CF(1) or is implicated in proton conduction. The protein is ATP synthase subunit delta of Limosilactobacillus reuteri (strain DSM 20016) (Lactobacillus reuteri).